We begin with the raw amino-acid sequence, 124 residues long: uncharacterized protein (124 aa).

Disordered stretches follow at residues 1–26 (MRRQ…QPRP) and 100–124 (IPGQ…GLRR). Over residues 102 to 115 (GQQSRNCSLPQTKY) the composition is skewed to polar residues.

The protein resides in the cytoplasm. The protein localises to the cytoskeleton. It is found in the cilium basal body. This is an uncharacterized protein from Rattus norvegicus (Rat).